Reading from the N-terminus, the 1025-residue chain is Multidrug resistance protein MdtC (1025 aa).

12 helical membrane-spanning segments follow: residues 3 to 23 (FFALFIYRPVATILLSVAITL), 333 to 353 (EVEQTLIISVALVILVVFLFL), 360 to 380 (IIPAVAVPVSLIGTFAAMYLC), 387 to 407 (LSLMALTIATGFVVDDAIVVL), 431 to 451 (VGFTVLSMSLSLVAVFLPLLL), 463 to 483 (FAVTLSVAIGISLLVSLTLTP), 528 to 548 (LVGVVLLGTIALNIWLYISIP), 853 to 873 (VILIIAAIATVYIVLGILYES), 875 to 895 (VHPLTILSTLPSAGVGALLAL), 897 to 917 (LFNAPFSLIALIGIMLLIGIV), 953 to 973 (PIMMTTLAALFGALPLVLSGG), and 984 to 1004 (ITIVGGLVMSQLLTLYTTPVV).

It belongs to the resistance-nodulation-cell division (RND) (TC 2.A.6) family. MdtC subfamily. In terms of assembly, part of a tripartite efflux system composed of MdtA, MdtB and MdtC. MdtC forms a heteromultimer with MdtB.

The protein resides in the cell inner membrane. The MdtABC tripartite complex confers resistance against novobiocin and deoxycholate. This is Multidrug resistance protein MdtC from Escherichia coli (strain 55989 / EAEC).